Here is a 484-residue protein sequence, read N- to C-terminus: Catalase (484 aa).

A Methionine sulfone modification is found at methionine 53. Active-site residues include histidine 54 and asparagine 127. Residue tyrosine 337 participates in heme binding.

As to quaternary structure, homotetramer. Heme serves as cofactor. The cofactor is NADP(+).

The protein resides in the cytoplasm. The catalysed reaction is 2 H2O2 = O2 + 2 H2O. Functionally, decomposes hydrogen peroxide into water and oxygen; serves to protect cells from the toxic effects of hydrogen peroxide. This chain is Catalase (katA), found in Proteus mirabilis.